Consider the following 505-residue polypeptide: ATP synthase subunit alpha, chloroplastic (505 aa).

170–177 (GDRQTGKT) provides a ligand contact to ATP.

Belongs to the ATPase alpha/beta chains family. In terms of assembly, F-type ATPases have 2 components, CF(1) - the catalytic core - and CF(0) - the membrane proton channel. CF(1) has five subunits: alpha(3), beta(3), gamma(1), delta(1), epsilon(1). CF(0) has four main subunits: a, b, b' and c.

Its subcellular location is the plastid. It localises to the chloroplast thylakoid membrane. The catalysed reaction is ATP + H2O + 4 H(+)(in) = ADP + phosphate + 5 H(+)(out). Functionally, produces ATP from ADP in the presence of a proton gradient across the membrane. The alpha chain is a regulatory subunit. This chain is ATP synthase subunit alpha, chloroplastic, found in Oenothera biennis (German evening primrose).